The following is a 927-amino-acid chain: SPX and EXS domain-containing protein 5 (927 aa).

The 460-residue stretch at 1-460 (MKFGKYLESQ…GLSIGSQVMS (460 aa)) folds into the SPX domain. 4 disordered regions span residues 54 to 78 (KINS…SSSN), 204 to 239 (KKNK…QHLQ), 257 to 305 (PIKS…DQDP), and 326 to 355 (SDNC…GGNN). Composition is skewed to low complexity over residues 60–78 (PSPT…SSSN) and 208–224 (LNNN…NNNN). Positions 257–270 (PIKSTPLSPKQQDG) are enriched in polar residues. A compositionally biased stretch (acidic residues) spans 286–299 (LEEEEEEEEEEDDN). 8 consecutive transmembrane segments (helical) span residues 516-536 (FFSG…YYFI), 553-573 (VYSA…DCWV), 597-617 (IFQA…VYMW), 636-656 (PLVL…IFQL), 682-702 (FFMG…AQFV), 769-789 (LSIV…DSGW), 845-862 (FVYY…TTWT), and 869-889 (QLTN…IEIL). The 211-residue stretch at 717–927 (GCIRYARYFN…LPYQIRDNEN (211 aa)) folds into the EXS domain.

Belongs to the SYG1 (TC 2.A.94) family.

Its subcellular location is the membrane. The chain is SPX and EXS domain-containing protein 5 from Dictyostelium discoideum (Social amoeba).